The following is a 353-amino-acid chain: Photosystem II protein D1 (353 aa).

T2 is modified (N-acetylthreonine). A Phosphothreonine modification is found at T2. The next 3 helical transmembrane spans lie at 29-46 (YIGWFGVLMIPTLLTATS), 118-133 (HFLLGVACYMGREWEL), and 142-156 (WIAVAYSAPVAAATA). H118 contributes to the chlorophyll a binding site. A pheophytin a-binding site is contributed by Y126. D170 and E189 together coordinate [CaMn4O5] cluster. Residues 197-218 (FHMLGVAGVFGGSLFSAMHGSL) traverse the membrane as a helical segment. H198 serves as a coordination point for chlorophyll a. A quinone is bound by residues H215 and 264 to 265 (SF). H215 serves as a coordination point for Fe cation. H272 is a binding site for Fe cation. Residues 274-288 (FLAAWPVVGIWFTAL) form a helical membrane-spanning segment. Residues H332, E333, and A344 each coordinate [CaMn4O5] cluster. The propeptide occupies 345–353 (AIEAPAVNG).

It belongs to the reaction center PufL/M/PsbA/D family. In terms of assembly, PSII is composed of 1 copy each of membrane proteins PsbA, PsbB, PsbC, PsbD, PsbE, PsbF, PsbH, PsbI, PsbJ, PsbK, PsbL, PsbM, PsbT, PsbX, PsbY, PsbZ, Psb30/Ycf12, at least 3 peripheral proteins of the oxygen-evolving complex and a large number of cofactors. It forms dimeric complexes. The D1/D2 heterodimer binds P680, chlorophylls that are the primary electron donor of PSII, and subsequent electron acceptors. It shares a non-heme iron and each subunit binds pheophytin, quinone, additional chlorophylls, carotenoids and lipids. D1 provides most of the ligands for the Mn4-Ca-O5 cluster of the oxygen-evolving complex (OEC). There is also a Cl(-1) ion associated with D1 and D2, which is required for oxygen evolution. The PSII complex binds additional chlorophylls, carotenoids and specific lipids. serves as cofactor. In terms of processing, tyr-161 forms a radical intermediate that is referred to as redox-active TyrZ, YZ or Y-Z. C-terminally processed by CTPA; processing is essential to allow assembly of the oxygen-evolving complex and thus photosynthetic growth.

It localises to the plastid. The protein resides in the chloroplast thylakoid membrane. It carries out the reaction 2 a plastoquinone + 4 hnu + 2 H2O = 2 a plastoquinol + O2. Its function is as follows. Photosystem II (PSII) is a light-driven water:plastoquinone oxidoreductase that uses light energy to abstract electrons from H(2)O, generating O(2) and a proton gradient subsequently used for ATP formation. It consists of a core antenna complex that captures photons, and an electron transfer chain that converts photonic excitation into a charge separation. The D1/D2 (PsbA/PsbD) reaction center heterodimer binds P680, the primary electron donor of PSII as well as several subsequent electron acceptors. This chain is Photosystem II protein D1, found in Conocephalum japonicum (Liverwort).